We begin with the raw amino-acid sequence, 620 residues long: Glutathione-regulated potassium-efflux system protein KefC (620 aa).

12 helical membrane-spanning segments follow: residues 4-24 (HTLLQALIYLGSAALIVPIAV), 26-46 (LGLGSVLGYLIAGCIIGPWGL), 54-74 (SILHFAEIGVVLMLFVIGLEL), 90-110 (GALQMVVCGGLIGLFCMFLGL), 114-134 (VAELIGMTLALSSTAIAMQAM), 149-169 (FAVLLFQDIAAIPLVAMIPLL), 178-198 (LGAFALSALKVAGALALVVLL), 218-238 (VFSAVALFLVFGFGLLLEEVG), 270-290 (GLLLGLFFIGVGMSIDFGTLV), 294-314 (LRILLLLAGFLTIKIVMLWLV), 327-347 (WFAVLLGQGSEFAFVVFGAAQ), and 359-379 (ALTLAVALSMAATPIFLVLLT). The RCK N-terminal domain occupies 399–518 (QPRVIVAGFG…AGVAMPERET (120 aa)). The disordered stretch occupies residues 599–620 (QGTAEGKHSGEAADEPEVKPSI).

It belongs to the monovalent cation:proton antiporter 2 (CPA2) transporter (TC 2.A.37) family. KefC subfamily. In terms of assembly, homodimer. Interacts with the regulatory subunit KefF.

The protein resides in the cell inner membrane. Its function is as follows. Pore-forming subunit of a potassium efflux system that confers protection against electrophiles. Catalyzes K(+)/H(+) antiport. The protein is Glutathione-regulated potassium-efflux system protein KefC of Salmonella schwarzengrund (strain CVM19633).